A 103-amino-acid chain; its full sequence is MIILKDGYKEFADCMYYFLHYYIGYGRYTYSATNGSCDKGEYLDKRHNQCCNRCPPGEFAKVRCNGNDNTKCERCPPHTYTTIPIILMDVINVENAQQDHLIR.

A TNFR-Cys 1 repeat occupies 36–73; sequence SCDKGEYLDKRHNQCCNRCPPGEFAKVRCNGNDNTKCE. 3 disulfide bridges follow: Cys-37–Cys-50, Cys-51–Cys-64, and Cys-54–Cys-72. A TNFR-Cys 2; truncated repeat occupies 74–103; that stretch reads RCPPHTYTTIPIILMDVINVENAQQDHLIR.

It belongs to the poxviridae A53R protein family.

This chain is Truncated secreted TNF-receptor-like protein A53, found in Vaccinia virus (strain Copenhagen) (VACV).